A 53-amino-acid polypeptide reads, in one-letter code: UPF0391 membrane protein YtjA (53 aa).

2 consecutive transmembrane segments (helical) span residues tryptophan 4–alanine 24 and alanine 30–methionine 48.

The protein belongs to the UPF0391 family.

It localises to the cell membrane. The chain is UPF0391 membrane protein YtjA from Escherichia coli O6:K15:H31 (strain 536 / UPEC).